The primary structure comprises 490 residues: GTPase Der (490 aa).

EngA-type G domains follow at residues 3–166 and 203–376; these read PVVA…VDEI and IKLA…DSST. Residues 9–16, 56–60, 118–121, 209–216, 256–260, and 321–324 contribute to the GTP site; these read GRPNVGKS, DTGGI, NKTD, DTAGV, and NKWD. A KH-like domain is found at 377 to 461; it reads RRQSTAMLTR…PIRIQFKEGE (85 aa).

It belongs to the TRAFAC class TrmE-Era-EngA-EngB-Septin-like GTPase superfamily. EngA (Der) GTPase family. As to quaternary structure, associates with the 50S ribosomal subunit.

GTPase that plays an essential role in the late steps of ribosome biogenesis. The sequence is that of GTPase Der from Enterobacter sp. (strain 638).